We begin with the raw amino-acid sequence, 538 residues long: Small ribosomal subunit protein uS3m (538 aa).

A disordered region spans residues 111-134; sequence SSEGTEEERNEVRGRGAGKRVESI. Residues 120–134 are compositionally biased toward basic and acidic residues; the sequence is NEVRGRGAGKRVESI.

The protein belongs to the universal ribosomal protein uS3 family.

Its subcellular location is the mitochondrion. The sequence is that of Small ribosomal subunit protein uS3m (RPS3) from Oryza sativa subsp. japonica (Rice).